The following is a 340-amino-acid chain: S-adenosylmethionine:tRNA ribosyltransferase-isomerase (340 aa).

This sequence belongs to the QueA family. In terms of assembly, monomer.

The protein resides in the cytoplasm. The enzyme catalyses 7-aminomethyl-7-carbaguanosine(34) in tRNA + S-adenosyl-L-methionine = epoxyqueuosine(34) in tRNA + adenine + L-methionine + 2 H(+). Its pathway is tRNA modification; tRNA-queuosine biosynthesis. Functionally, transfers and isomerizes the ribose moiety from AdoMet to the 7-aminomethyl group of 7-deazaguanine (preQ1-tRNA) to give epoxyqueuosine (oQ-tRNA). In Vesicomyosocius okutanii subsp. Calyptogena okutanii (strain HA), this protein is S-adenosylmethionine:tRNA ribosyltransferase-isomerase.